Reading from the N-terminus, the 173-residue chain is CKLF-like MARVEL transmembrane domain-containing protein 8 (173 aa).

The region spanning 36-168 (FLRTLPGLLI…NTYFSFIAWR (133 aa)) is the MARVEL domain. A run of 4 helical transmembrane segments spans residues 40-60 (LPGL…TLIA), 70-90 (FGWV…FLII), 105-125 (TTVG…AAIV), and 147-167 (FFAF…FIAW).

This sequence belongs to the chemokine-like factor family.

It localises to the membrane. This chain is CKLF-like MARVEL transmembrane domain-containing protein 8 (CMTM8), found in Bos taurus (Bovine).